We begin with the raw amino-acid sequence, 205 residues long: Small ribosomal subunit protein uS4 (205 aa).

Residues 20–47 are disordered; sequence WGRSKSPLNRGKENPPGQHGQRRKKPSD. The S4 RNA-binding domain maps to 94–154; the sequence is CRLDAVVYRL…TKSKDMALIL (61 aa).

This sequence belongs to the universal ribosomal protein uS4 family. As to quaternary structure, part of the 30S ribosomal subunit. Contacts protein S5. The interaction surface between S4 and S5 is involved in control of translational fidelity.

Functionally, one of the primary rRNA binding proteins, it binds directly to 16S rRNA where it nucleates assembly of the body of the 30S subunit. Its function is as follows. With S5 and S12 plays an important role in translational accuracy. This chain is Small ribosomal subunit protein uS4, found in Paramagnetospirillum magneticum (strain ATCC 700264 / AMB-1) (Magnetospirillum magneticum).